Consider the following 743-residue polypeptide: Pentatricopeptide repeat-containing protein At2g16880 (743 aa).

PPR repeat units lie at residues 130–164, 165–202, 203–233, 239–273, 274–308, 309–343, 344–378, 379–414, 415–449, 450–484, 485–519, 520–554, 555–589, 590–620, 624–658, and 659–689; these read SKAL…KLKP, NLLT…GVSL, NVQT…MVSE, DNVT…GLVP, NRVT…NVLP, DLCT…KLQP, DVVT…GVKA, NQVT…GFSP, DIVT…GIKM, NTIT…GFIV, DEVT…KITP, TVST…GLLP, DDST…SFKP, DNYT…LIEE, DTVT…GLEP, and DRFT…FSGK.

Belongs to the PPR family. P subfamily.

The protein is Pentatricopeptide repeat-containing protein At2g16880 of Arabidopsis thaliana (Mouse-ear cress).